We begin with the raw amino-acid sequence, 136 residues long: Large ribosomal subunit protein uL16 (136 aa).

It belongs to the universal ribosomal protein uL16 family. In terms of assembly, part of the 50S ribosomal subunit.

Functionally, binds 23S rRNA and is also seen to make contacts with the A and possibly P site tRNAs. The polypeptide is Large ribosomal subunit protein uL16 (Buchnera aphidicola subsp. Baizongia pistaciae (strain Bp)).